The primary structure comprises 598 residues: Elongation factor 4 (598 aa).

The tr-type G domain maps to 2 to 184; that stretch reads KQIRNFSIIA…RLVKEIPAPE (183 aa). GTP-binding positions include 14–19 and 131–134; these read DHGKST and NKID.

Belongs to the TRAFAC class translation factor GTPase superfamily. Classic translation factor GTPase family. LepA subfamily.

Its subcellular location is the cell inner membrane. The enzyme catalyses GTP + H2O = GDP + phosphate + H(+). Functionally, required for accurate and efficient protein synthesis under certain stress conditions. May act as a fidelity factor of the translation reaction, by catalyzing a one-codon backward translocation of tRNAs on improperly translocated ribosomes. Back-translocation proceeds from a post-translocation (POST) complex to a pre-translocation (PRE) complex, thus giving elongation factor G a second chance to translocate the tRNAs correctly. Binds to ribosomes in a GTP-dependent manner. The protein is Elongation factor 4 of Photorhabdus laumondii subsp. laumondii (strain DSM 15139 / CIP 105565 / TT01) (Photorhabdus luminescens subsp. laumondii).